The sequence spans 549 residues: Pleckstrin homology domain-containing family A member 8 (549 aa).

The PH domain maps to 1-93 (MEGVLYKWTN…WLVALGTAKA (93 aa)). 2 disordered regions span residues 180–245 (NPDL…ENIS) and 257–312 (QNDL…QEVQ). Over residues 203–219 (KSNDPKNLHPGETRKDL) the composition is skewed to basic and acidic residues. The segment covering 276–288 (EPVEEQQTDGSTE) has biased composition (acidic residues). Positions 299–309 (EVSMSPTQNKQ) are enriched in polar residues.

The protein resides in the cytoplasm. Its subcellular location is the golgi apparatus. It localises to the trans-Golgi network membrane. The protein localises to the membrane. In terms of biological role, cargo transport protein that is required for apical transport from the trans-Golgi network (TGN) to the plasma membrane. This Danio rerio (Zebrafish) protein is Pleckstrin homology domain-containing family A member 8 (plekha8).